A 473-amino-acid chain; its full sequence is MSMKISEKKFNDRVGDGIQDSFMRGAVSSAQTRLYTNRLKAADELGNWEEWRELGEQIRQHTLENLDYYLMQLSENVSKRGGHVYFAKTKEDAAKYIQDVAKKKQAKKVVKSKSMVTEEISMNHALEEIGCEVLESDLGEYILQVDNDPPSHIIAPALHKNRTQIRDVFKEKLGYENSDDPYEMTKFVRKQLREKFMDAEIGVTGCNFAVANTGSLCLVTNEGNADLVMSIPKTQIAVMGMERMVPTMEELDVLVGLLCRSAVGQKLTSYVTVAGPIQEEEVDGPEEFHLVVVDNGRSQILGSEFRSILQCIRCAACVNVCPVYRHVGGHSYGSIYSGPIGAVLTPLLGGYDDYKELPYASSLCGACTEACPVKIPLHDLLLKHRQVIVEQEGRAPLAEKLAMKMFSMGASSAALYKMGSKMAPAAMSPFTSGNRVSKGVGPLKNWTDIREFPAPSKERFRDWYKNHKKGGDK.

4Fe-4S ferredoxin-type domains follow at residues 302-332 (GSEF…GHSY) and 351-380 (YDDY…LHDL). Positions 311, 314, 317, 321, 364, 367, and 371 each coordinate [4Fe-4S] cluster.

It belongs to the LutB/YkgF family.

Is involved in L-lactate degradation and allows cells to grow with lactate as the sole carbon source. Has probably a role as an electron transporter during oxidation of L-lactate. This Bacillus mycoides (strain KBAB4) (Bacillus weihenstephanensis) protein is Lactate utilization protein B 2.